The following is a 179-amino-acid chain: Ribosome maturation factor RimM (179 aa).

The PRC barrel domain occupies 100 to 176; sequence KEEFHLLELI…FIIINPPNGL (77 aa).

It belongs to the RimM family. Binds ribosomal protein uS19.

It is found in the cytoplasm. An accessory protein needed during the final step in the assembly of 30S ribosomal subunit, possibly for assembly of the head region. Essential for efficient processing of 16S rRNA. May be needed both before and after RbfA during the maturation of 16S rRNA. It has affinity for free ribosomal 30S subunits but not for 70S ribosomes. This Prochlorococcus marinus (strain MIT 9215) protein is Ribosome maturation factor RimM.